A 144-amino-acid polypeptide reads, in one-letter code: Cytochrome c oxidase subunit 4 isoform 1, mitochondrial (144 aa).

Topologically, residues 1–73 (SVVKSEDFTL…SFAEMNRRSN (73 aa)) are mitochondrial matrix. Position 4 is an N6-acetyllysine; alternate (lysine 4). The residue at position 4 (lysine 4) is an N6-succinyllysine; alternate. Lysine 28 carries the post-translational modification N6-acetyllysine. Residues serine 31 and serine 33 each carry the phosphoserine modification. The residue at position 35 (lysine 35) is an N6-acetyllysine; alternate. At lysine 35 the chain carries N6-succinyllysine; alternate. Lysine 42 carries the N6-acetyllysine modification. The helical transmembrane segment at 74-99 (EWKTVVGTAMFFFGITALIVMWEKRY) threads the bilayer. Residues 100 to 144 (VYGPLPQTFDKEWVAMQTKRMLDMKVNPIQGLASKWDYEKNEWKK) are Mitochondrial intermembrane-facing.

Belongs to the cytochrome c oxidase IV family. In terms of assembly, component of the cytochrome c oxidase (complex IV, CIV), a multisubunit enzyme composed of 14 subunits. The complex is composed of a catalytic core of 3 subunits MT-CO1, MT-CO2 and MT-CO3, encoded in the mitochondrial DNA, and 11 supernumerary subunits COX4I, COX5A, COX5B, COX6A, COX6B, COX6C, COX7A, COX7B, COX7C, COX8 and NDUFA4, which are encoded in the nuclear genome. The complex exists as a monomer or a dimer and forms supercomplexes (SCs) in the inner mitochondrial membrane with NADH-ubiquinone oxidoreductase (complex I, CI) and ubiquinol-cytochrome c oxidoreductase (cytochrome b-c1 complex, complex III, CIII), resulting in different assemblies (supercomplex SCI(1)III(2)IV(1) and megacomplex MCI(2)III(2)IV(2)). Interacts with PHB2; the interaction decreases in absence of SPHK2. Interacts with AFG1L. Interacts with ABCB7; this interaction allows the regulation of cellular iron homeostasis and cellular reactive oxygen species (ROS) levels in cardiomyocytes. Interacts with FLVCR2; this interaction occurs in the absence of heme and is disrupted upon heme binding. Interacts with IRGC.

Its subcellular location is the mitochondrion inner membrane. It participates in energy metabolism; oxidative phosphorylation. Functionally, component of the cytochrome c oxidase, the last enzyme in the mitochondrial electron transport chain which drives oxidative phosphorylation. The respiratory chain contains 3 multisubunit complexes succinate dehydrogenase (complex II, CII), ubiquinol-cytochrome c oxidoreductase (cytochrome b-c1 complex, complex III, CIII) and cytochrome c oxidase (complex IV, CIV), that cooperate to transfer electrons derived from NADH and succinate to molecular oxygen, creating an electrochemical gradient over the inner membrane that drives transmembrane transport and the ATP synthase. Cytochrome c oxidase is the component of the respiratory chain that catalyzes the reduction of oxygen to water. Electrons originating from reduced cytochrome c in the intermembrane space (IMS) are transferred via the dinuclear copper A center (CU(A)) of subunit 2 and heme A of subunit 1 to the active site in subunit 1, a binuclear center (BNC) formed by heme A3 and copper B (CU(B)). The BNC reduces molecular oxygen to 2 water molecules using 4 electrons from cytochrome c in the IMS and 4 protons from the mitochondrial matrix. In Theropithecus gelada (Gelada baboon), this protein is Cytochrome c oxidase subunit 4 isoform 1, mitochondrial (COX4I1).